The following is a 382-amino-acid chain: 1-deoxy-D-xylulose 5-phosphate reductoisomerase (382 aa).

NADPH-binding residues include T10, G11, S12, I13, G36, K37, N38, and N121. K122 contacts 1-deoxy-D-xylulose 5-phosphate. NADPH is bound at residue E123. D147 is a binding site for Mn(2+). Residues S148, E149, S173, and H196 each contribute to the 1-deoxy-D-xylulose 5-phosphate site. E149 contributes to the Mn(2+) binding site. G202 is an NADPH binding site. 1-deoxy-D-xylulose 5-phosphate-binding residues include S209, N214, K215, and E218. Residue E218 participates in Mn(2+) binding.

The protein belongs to the DXR family. Mg(2+) serves as cofactor. The cofactor is Mn(2+).

It carries out the reaction 2-C-methyl-D-erythritol 4-phosphate + NADP(+) = 1-deoxy-D-xylulose 5-phosphate + NADPH + H(+). The protein operates within isoprenoid biosynthesis; isopentenyl diphosphate biosynthesis via DXP pathway; isopentenyl diphosphate from 1-deoxy-D-xylulose 5-phosphate: step 1/6. Functionally, catalyzes the NADPH-dependent rearrangement and reduction of 1-deoxy-D-xylulose-5-phosphate (DXP) to 2-C-methyl-D-erythritol 4-phosphate (MEP). This is 1-deoxy-D-xylulose 5-phosphate reductoisomerase from Halalkalibacterium halodurans (strain ATCC BAA-125 / DSM 18197 / FERM 7344 / JCM 9153 / C-125) (Bacillus halodurans).